Consider the following 319-residue polypeptide: Pantothenate kinase (319 aa).

ATP is bound at residue 97–104 (GSVAVGKS).

This sequence belongs to the prokaryotic pantothenate kinase family.

It is found in the cytoplasm. The enzyme catalyses (R)-pantothenate + ATP = (R)-4'-phosphopantothenate + ADP + H(+). Its pathway is cofactor biosynthesis; coenzyme A biosynthesis; CoA from (R)-pantothenate: step 1/5. In Chelativorans sp. (strain BNC1), this protein is Pantothenate kinase.